The chain runs to 208 residues: Sexual inducer glycoprotein (208 aa).

The N-terminal stretch at 1-11 (MAVVVVNSATA) is a signal peptide. 6 N-linked (GlcNAc...) asparagine glycosylation sites follow: N89, N119, N131, N139, N146, and N188.

Its function is as follows. The sexual inducer is a glycoprotein synthesized and released by sexual males at about the time they release sperm packets. It is one of the most potent biological effector molecules known: it exhibits full effectiveness in converting asexually growing males and females to the sexual pathway at about 10(-7) m. The polypeptide is Sexual inducer glycoprotein (Volvox carteri (Green alga)).